The following is a 231-amino-acid chain: Uracil phosphoribosyltransferase (231 aa).

38 to 42 (KGLVR) serves as a coordination point for GTP. 5-phospho-alpha-D-ribose 1-diphosphate contacts are provided by residues Arg87, Arg112, and 140–148 (DPMIATGST). Uracil contacts are provided by residues Ile203 and 208 to 210 (GDA). Asp209 serves as a coordination point for 5-phospho-alpha-D-ribose 1-diphosphate.

The protein belongs to the UPRTase family. Requires Mg(2+) as cofactor.

It catalyses the reaction UMP + diphosphate = 5-phospho-alpha-D-ribose 1-diphosphate + uracil. The protein operates within pyrimidine metabolism; UMP biosynthesis via salvage pathway; UMP from uracil: step 1/1. Allosterically activated by GTP. Catalyzes the conversion of uracil and 5-phospho-alpha-D-ribose 1-diphosphate (PRPP) to UMP and diphosphate. The sequence is that of Uracil phosphoribosyltransferase from Methanococcus maripaludis (strain C6 / ATCC BAA-1332).